Here is a 360-residue protein sequence, read N- to C-terminus: DNA replication and repair protein RecF (360 aa).

Gly33 to Thr40 lines the ATP pocket.

The protein belongs to the RecF family.

It is found in the cytoplasm. Its function is as follows. The RecF protein is involved in DNA metabolism; it is required for DNA replication and normal SOS inducibility. RecF binds preferentially to single-stranded, linear DNA. It also seems to bind ATP. The chain is DNA replication and repair protein RecF from Rickettsia bellii (strain OSU 85-389).